Reading from the N-terminus, the 94-residue chain is Prepro-gonadotropin-releasing hormone-like protein (94 aa).

The signal sequence occupies residues 1–21; the sequence is MNACILLTTLVTMITIEKVQG.

It is found in the secreted. Neuropeptide involved in reproduction. May be an important hormone in the regulation of gonadal maturation. This chain is Prepro-gonadotropin-releasing hormone-like protein, found in Ruditapes philippinarum (Japanese carpet shell).